Consider the following 335-residue polypeptide: MDERIISSETVDAEEVSFETSLRPQTLSQYIGQDKVKNNLTVFIEAATLRNEALDHVLLYGPPGLGKTTLAMVIASEMGSEIKTTSGPAIERPGDLATILTSLEPGDVLFIDEIHRLSRAIEEILYPAMEDYCLDIVIGTGPTARSVRLDLPPFTLIGATTRAGLLSAPLRDRFGVIDHLEFYTEEQLTEIVLRTSGILDTKIDDLGAREIARRSRGTPRIANRLLKRVRDFAQVRGNGTVTEKLAKEALTLLQVDPRGLDTIDQKLLHTIIQSFRGGPVGLDTIAASIGEERETIEDMQEPYLLQIGFLQRTPRGRIATETAYNHLGISYEKEV.

Residues 1-183 (MDERIISSET…FGVIDHLEFY (183 aa)) are large ATPase domain (RuvB-L). Residues L22, R23, G64, K67, T68, T69, 130-132 (EDY), R173, Y183, and R220 contribute to the ATP site. T68 provides a ligand contact to Mg(2+). Residues 184–254 (TEEQLTEIVL…LAKEALTLLQ (71 aa)) form a small ATPAse domain (RuvB-S) region. The tract at residues 257–335 (PRGLDTIDQK…HLGISYEKEV (79 aa)) is head domain (RuvB-H). Positions 293, 312, and 317 each coordinate DNA.

The protein belongs to the RuvB family. As to quaternary structure, homohexamer. Forms an RuvA(8)-RuvB(12)-Holliday junction (HJ) complex. HJ DNA is sandwiched between 2 RuvA tetramers; dsDNA enters through RuvA and exits via RuvB. An RuvB hexamer assembles on each DNA strand where it exits the tetramer. Each RuvB hexamer is contacted by two RuvA subunits (via domain III) on 2 adjacent RuvB subunits; this complex drives branch migration. In the full resolvosome a probable DNA-RuvA(4)-RuvB(12)-RuvC(2) complex forms which resolves the HJ.

It localises to the cytoplasm. It carries out the reaction ATP + H2O = ADP + phosphate + H(+). The RuvA-RuvB-RuvC complex processes Holliday junction (HJ) DNA during genetic recombination and DNA repair, while the RuvA-RuvB complex plays an important role in the rescue of blocked DNA replication forks via replication fork reversal (RFR). RuvA specifically binds to HJ cruciform DNA, conferring on it an open structure. The RuvB hexamer acts as an ATP-dependent pump, pulling dsDNA into and through the RuvAB complex. RuvB forms 2 homohexamers on either side of HJ DNA bound by 1 or 2 RuvA tetramers; 4 subunits per hexamer contact DNA at a time. Coordinated motions by a converter formed by DNA-disengaged RuvB subunits stimulates ATP hydrolysis and nucleotide exchange. Immobilization of the converter enables RuvB to convert the ATP-contained energy into a lever motion, pulling 2 nucleotides of DNA out of the RuvA tetramer per ATP hydrolyzed, thus driving DNA branch migration. The RuvB motors rotate together with the DNA substrate, which together with the progressing nucleotide cycle form the mechanistic basis for DNA recombination by continuous HJ branch migration. Branch migration allows RuvC to scan DNA until it finds its consensus sequence, where it cleaves and resolves cruciform DNA. The protein is Holliday junction branch migration complex subunit RuvB of Listeria innocua serovar 6a (strain ATCC BAA-680 / CLIP 11262).